Here is a 320-residue protein sequence, read N- to C-terminus: Probable cell division protein WhiA (320 aa).

The H-T-H motif DNA-binding region spans 276 to 310 (TLKELGEMVESGKVSKSGVNHRLRKIDELAEKLRA).

It belongs to the WhiA family.

In terms of biological role, involved in cell division and chromosome segregation. This is Probable cell division protein WhiA from Halalkalibacterium halodurans (strain ATCC BAA-125 / DSM 18197 / FERM 7344 / JCM 9153 / C-125) (Bacillus halodurans).